Reading from the N-terminus, the 104-residue chain is Gastrin (104 aa).

Positions 1–21 are cleaved as a signal peptide; that stretch reads MQRLCAHALILVLALAAFCEA. Residues 22–58 constitute a propeptide that is removed on maturation; it reads SWKPHSQLQDAPVAPGANKGQEPLRMDRLGPASHPRR. Residues 26 to 70 are disordered; that stretch reads HSQLQDAPVAPGANKGQEPLRMDRLGPASHPRRQLGLQDPPHMVA. Y87 carries the post-translational modification Sulfotyrosine. Phenylalanine amide is present on F92. Phosphoserine is present on S96. Residues 96 to 104 constitute a propeptide that is removed on maturation; sequence SAEEGDQHP.

It belongs to the gastrin/cholecystokinin family. Post-translationally, sulfation enhances proteolytic processing, and blocks peptide degradation. Levels of sulfation differ between proteolytically-cleaved gastrins and between tissues.

The protein resides in the secreted. Functionally, gastrin stimulates the stomach mucosa to produce and secrete hydrochloric acid and the pancreas to secrete its digestive enzymes. It also stimulates smooth muscle contraction and increases blood circulation and water secretion in the stomach and intestine. This is Gastrin (GAST) from Ovis aries (Sheep).